The primary structure comprises 834 residues: Leucine--tRNA ligase (834 aa).

A 'HIGH' region motif is present at residues 42-52 (PYPSGKLHMGH). A 'KMSKS' region motif is present at residues 619–623 (KMSKS). Lys-622 is an ATP binding site.

The protein belongs to the class-I aminoacyl-tRNA synthetase family.

The protein localises to the cytoplasm. It carries out the reaction tRNA(Leu) + L-leucine + ATP = L-leucyl-tRNA(Leu) + AMP + diphosphate. This is Leucine--tRNA ligase from Actinobacillus pleuropneumoniae serotype 7 (strain AP76).